Consider the following 179-residue polypeptide: uncharacterized protein (179 aa).

The protein belongs to the CAPAB/TerDEXZ family.

This is an uncharacterized protein from Synechocystis sp. (strain ATCC 27184 / PCC 6803 / Kazusa).